The following is a 166-amino-acid chain: Protein-export protein SecB (166 aa).

It belongs to the SecB family. As to quaternary structure, homotetramer, a dimer of dimers. One homotetramer interacts with 1 SecA dimer.

It localises to the cytoplasm. In terms of biological role, one of the proteins required for the normal export of preproteins out of the cell cytoplasm. It is a molecular chaperone that binds to a subset of precursor proteins, maintaining them in a translocation-competent state. It also specifically binds to its receptor SecA. The polypeptide is Protein-export protein SecB (Rhizorhabdus wittichii (strain DSM 6014 / CCUG 31198 / JCM 15750 / NBRC 105917 / EY 4224 / RW1) (Sphingomonas wittichii)).